Consider the following 432-residue polypeptide: UPF0761 membrane protein Cag_0935 (432 aa).

6 helical membrane passes run 52–72, 108–128, 148–168, 190–210, 220–240, and 254–274; these read LLSI…FEVF, NIPL…LSTV, FTLY…SLAA, LLAL…YMLV, AFAG…WFLF, and ALSV…VVLV.

It belongs to the UPF0761 family.

The protein localises to the cell inner membrane. The chain is UPF0761 membrane protein Cag_0935 from Chlorobium chlorochromatii (strain CaD3).